The primary structure comprises 514 residues: RNA-binding region-containing protein 3 (514 aa).

Positions M1–D26 are disordered. S21 carries the phosphoserine modification. Residues R27–E102 enclose the RRM 1 domain. Disordered stretches follow at residues V106–E133, M213–K282, and E337–I363. S108 is modified (phosphoserine). Residues T115–E133 show a composition bias toward basic and acidic residues. The segment covering A217–P230 has biased composition (pro residues). The residue at position 349 (S349) is a Phosphoserine. Positions C418 to S501 constitute an RRM 2 domain.

Component of the U11/U12 snRNPs that are part of the U12-type spliceosome. Found in a complex with m(7)G-capped U12 snRNA. Interacts with PDCD7.

It localises to the nucleus. Participates in pre-mRNA U12-dependent splicing, performed by the minor spliceosome which removes U12-type introns. U12-type introns comprises less than 1% of all non-coding sequences. Binds to the 3'-stem-loop of m(7)G-capped U12 snRNA. The polypeptide is RNA-binding region-containing protein 3 (Rnpc3) (Mus musculus (Mouse)).